Consider the following 1249-residue polypeptide: Voltage-dependent calcium channel unc-36 (1249 aa).

The signal sequence occupies residues methionine 1–serine 19. The Extracellular portion of the chain corresponds to phenylalanine 20 to threonine 1228. N-linked (GlcNAc...) asparagine glycans are attached at residues asparagine 100, asparagine 140, asparagine 146, asparagine 302, asparagine 520, asparagine 558, asparagine 757, asparagine 838, asparagine 903, asparagine 923, and asparagine 1130. Residues asparagine 250–methionine 479 enclose the VWFA domain. The chain crosses the membrane as a helical span at residues serine 1229–isoleucine 1248. Phenylalanine 1249 is a topological domain (cytoplasmic).

As to expression, decendants of the cells AB and AB.p (that give rise to nearly all non-pharyngeal neurons), decendants of P1 (that give rise to body muscle) and cell lineages that give rise to the adult and juvenile motor neurons. Expressed in body wall, vulval muscle and pharyngeal muscle.

It localises to the membrane. In terms of biological role, may act as an auxiliary subunit of the unc-2 voltage-gated calcium channel which appears to trigger calcium-activated signaling pathways that control the serotonin response. Inhibiting serotonin sensitivity of the vulval muscles results in egg laying defects. May act in both neurons and muscle cells to enhance motor activity as it is required for coordinated movement. Has a role in neural depolarization-induced calcium influx and pharyngeal pumping. Involved in restricting the expression of the putative olfactory receptor str-2 to only one of the two AWC neurons. In Caenorhabditis elegans, this protein is Voltage-dependent calcium channel unc-36 (unc-36).